Consider the following 484-residue polypeptide: UDP-glucose:undecaprenyl-phosphate glucose-1-phosphate transferase (484 aa).

Transmembrane regions (helical) follow at residues 37 to 57 (MVVA…VPAA), 59 to 79 (YRVA…LFPL), 93 to 113 (VVLG…ALIV), 122 to 142 (GWVG…RTLL), and 299 to 319 (ILAV…AVGV).

It belongs to the bacterial sugar transferase family.

Its subcellular location is the cell inner membrane. The catalysed reaction is di-trans,octa-cis-undecaprenyl phosphate + UDP-alpha-D-glucose = alpha-D-glucosyl di-trans,octa-cis-undecaprenyl diphosphate + UMP. It functions in the pathway glycan biosynthesis; xanthan biosynthesis. In terms of biological role, is the initiating enzyme for the synthesis of the exopolysaccharide xanthan. Catalyzes the transfer of the glucose-1-phosphate moiety from UDP-Glc onto the carrier lipid undecaprenyl phosphate (C55-P), forming a phosphoanhydride bond yielding to glucosyl-pyrophosphoryl-undecaprenol (Glc-PP-C55). The protein is UDP-glucose:undecaprenyl-phosphate glucose-1-phosphate transferase (gumD) of Xanthomonas campestris pv. campestris.